A 359-amino-acid polypeptide reads, in one-letter code: Transcription factor MYB115 (359 aa).

Residues 1–17 (MYHQNLISSTPNQNSNP) are compositionally biased toward polar residues. Positions 1–21 (MYHQNLISSTPNQNSNPHDWD) are disordered. 2 HTH myb-type domains span residues 153–208 (KDII…RPNI) and 209–259 (KKND…RRLH). 2 consecutive DNA-binding regions (H-T-H motif) follow at residues 181–204 (WTSIAKMFQGRVGKQCRERWHNHL) and 232–255 (WTEIAKRLPGRSENIVKNHWNATK).

In terms of tissue distribution, accumulates in reproductive organs (e.g. flowers and siliques). Expressed at very low levels in vegetative organs.

It is found in the nucleus. Transcription activator that recognizes the motif 5'-TAACGG-3' in the promoter of target genes. Promotes vegetative-to-embryonic transition and the formation of somatic embryos from root explants in a WUS-independent manner. Together with MYB118, activates the transcription of S-ACP-DES2/AAD2 and S-ACP-DES3/AAD3 thus promoting the biosynthesis of omega-7 monounsaturated fatty acid in seed endosperm. The sequence is that of Transcription factor MYB115 from Arabidopsis thaliana (Mouse-ear cress).